Reading from the N-terminus, the 1101-residue chain is MEDRQNDQNDDVFSFFSPSFSAATPSTLFNRSAYSSSSSSGDDESQPSVDDSNKRIDYMIQFLDRRLSEDGNHDGIGDGNGSDSLPEFVGKCGESGIFKVPIRSAVHPNRPPSLDVRPHPLRETQIGRFLRTMTSTERQLWTGGEDGALRVWEFSELYGSGRGLEVEDTAPYKESLGNEFGSAAVVCMIGDEGSRVVWSGHRDGRIRCWRLRGDHGIEEALSWQAHRGPVLSIAISAYGDIWSGSEGGALKVWPWDGALGKSLSLKMEERHMAALAVERSYIDPRNMVSANGFANTLTSDVTFLVSDHTRARVWSASPLTFAIWDARTRDLIKVFNIDGQLENRPENSVYPDFGSEEEGKMKVTASKKEKAQSSLGFFQRSRNAIMGAADAVRRAATKGGFCDDSRKTEAIVISVDGMIWTGSSNGILMRWDGNGNCLQEFAYESSGILCMFTFCSRLWVGYSNGTVQVWDLEGKLLGGWVAHSGPVIKMAIGAGYLFTLANHGGIRGWNVTSPGPLDNVLRAELAGKEFLYSRIENLKILAGTWNVGEGRASTDSLVSWLGCAATGVEIVVVGLQEVEMGAGVLAMSAAKETVGLEGSPLGQWWLDMIGKTLDEGSSFVRVGSRQLAGLLICVWVRHDLKPHVGDVDAAAVPCGFGRAIGNKGAVGVRLRMYDRVLCFVNCHFAAHLEAVNRRNADFDHVYRTMTFSRQSSSLNAGVAGASFGVTMPRGGNALGVNTIEARPELSEADMVIFLGDFNYRLDDITYDETRDFISQRCFDWLREKDQLHTEMEAGNVFQGMREAIIRFPPTYKFERHQAGLAGYDSGEKKRIPAWCDRILYRDNKKHLGAECSLDCPVVSSISQYDACMEVTDSDHKPVRCVFSVKIARVDESVRRQEYGNIINSNKKIKVLLGELSKVPETIVSTNNIILQNQDSTILRITNKSEKNIAFFKIICEGQSKIEEDGQAHDHRARGSFGFPQWLEVSPGTGTIKPNQIAEVSVHLEDFPTVEEFVDGVAQNSWCEDTRDKEVILVLVVHGRFSTETRKHRIRVRHCPRGGPAKNHFNDGTKTSGQINALHRSDYHQLSNTLDVVEQLKNLHSP.

Residues 31 to 40 (RSAYSSSSSS) show a composition bias toward low complexity. A disordered region spans residues 31 to 54 (RSAYSSSSSSGDDESQPSVDDSNK). WD repeat units follow at residues 121-162 (LRET…GSGR), 180-219 (FGSAAVVCMIGDEGSRVVWSGHRDGRIRCWRLRGDHGIEE), 225-263 (AHRGPVLSIAISAYGDIWSGSEGGALKVWPWDGALGKSL), 403-432 (DDSRKTEAIVISVDGMIWTGSSNGILMRWD), 433-481 (GNGN…GGWV), and 483-519 (HSGPVIKMAIGAGYLFTLANHGGIRGWNVTSPGPLDN). Catalytic regions lie at residues 749–765 (DMVIFLGDFNYRLDDIT) and 828–843 (KKRIPAWCDRILYRDN). K907 is covalently cross-linked (Glycyl lysine isopeptide (Lys-Gly) (interchain with G-Cter in ubiquitin)).

The protein belongs to the inositol polyphosphate 5-phosphatase family. Mg(2+) is required as a cofactor. In terms of tissue distribution, predominantly expressed in interfascicular fibers and vascular bundles. Expressed in seedlings, stems, roots and flowers. Expressed at lower level in mature leaves.

The enzyme catalyses a 1,2-diacyl-sn-glycero-3-phospho-(1D-myo-inositol-4,5-bisphosphate) + H2O = a 1,2-diacyl-sn-glycero-3-phospho-(1D-myo-inositol 4-phosphate) + phosphate. It catalyses the reaction a 1,2-diacyl-sn-glycero-3-phospho-(1D-myo-inositol-3,4,5-trisphosphate) + H2O = a 1,2-diacyl-sn-glycero-3-phospho-(1D-myo-inositol-3,4-bisphosphate) + phosphate. It carries out the reaction 1D-myo-inositol 1,4,5-trisphosphate + H2O = 1D-myo-inositol 1,4-bisphosphate + phosphate. Its function is as follows. Has phosphatase activity toward PtdIns(4,5)P2, PtdIns(3,4,5)P3 and Ins(1,4,5)P3. Has a higher substrate affinity toward PtdIns(4,5)P2. Required for secondary wall synthesis and actin organization in fiber cells. The polypeptide is Type II inositol polyphosphate 5-phosphatase 15 (Arabidopsis thaliana (Mouse-ear cress)).